The sequence spans 297 residues: uncharacterized protein (297 aa).

Residue glutamate 46 is part of the active site.

It belongs to the PhzF family. As to quaternary structure, homodimer and homotetramer.

This is an uncharacterized protein from Escherichia coli (strain K12).